The sequence spans 208 residues: Guanylate kinase (208 aa).

The Guanylate kinase-like domain occupies 5–184; that stretch reads GLLIVFSGPS…AAERVKCVIE (180 aa). An ATP-binding site is contributed by 12 to 19; it reads GPSGVGKG.

It belongs to the guanylate kinase family.

The protein localises to the cytoplasm. The enzyme catalyses GMP + ATP = GDP + ADP. In terms of biological role, essential for recycling GMP and indirectly, cGMP. In Streptococcus pneumoniae serotype 4 (strain ATCC BAA-334 / TIGR4), this protein is Guanylate kinase.